A 541-amino-acid chain; its full sequence is Membrane protein insertase YidC (541 aa).

Helical transmembrane passes span Leu7 to Tyr27, Ile346 to Leu368, Leu416 to Phe436, Leu454 to Leu474, and Pro495 to Val515.

It belongs to the OXA1/ALB3/YidC family. Type 1 subfamily. As to quaternary structure, interacts with the Sec translocase complex via SecD. Specifically interacts with transmembrane segments of nascent integral membrane proteins during membrane integration.

It localises to the cell inner membrane. Required for the insertion and/or proper folding and/or complex formation of integral membrane proteins into the membrane. Involved in integration of membrane proteins that insert both dependently and independently of the Sec translocase complex, as well as at least some lipoproteins. Aids folding of multispanning membrane proteins. The polypeptide is Membrane protein insertase YidC (Pasteurella multocida (strain Pm70)).